We begin with the raw amino-acid sequence, 447 residues long: UPF0210 protein Lreu_0940 (447 aa).

It belongs to the UPF0210 family. In terms of assembly, homodimer.

This chain is UPF0210 protein Lreu_0940, found in Limosilactobacillus reuteri (strain DSM 20016) (Lactobacillus reuteri).